A 479-amino-acid chain; its full sequence is Glutathione gamma-glutamylcysteinyltransferase 3 (479 aa).

A Peptidase C83 domain is found at 1–221; the sequence is MASAGLYRRV…GYMIISKLKR (221 aa). Residues Cys-56, His-162, and Asp-180 contribute to the active site.

Belongs to the phytochelatin synthase family. As to expression, expressed in roots, nodules and leaves.

The catalysed reaction is [Glu(-Cys)](n)-Gly + glutathione + H(+) = [Glu(-Cys)](n+1)-Gly + glycine. Its activity is regulated as follows. Requires cadmium for activity. Functionally, involved in the synthesis of phytochelatins (PC) and homophytochelatins (hPC), the heavy-metal-binding peptides of plants. The sequence is that of Glutathione gamma-glutamylcysteinyltransferase 3 (PCS3) from Lotus japonicus (Lotus corniculatus var. japonicus).